The chain runs to 198 residues: Recombination protein RecR (198 aa).

The C4-type zinc finger occupies 57–72 (CSVCGNITDEDPCEIC). The Toprim domain occupies 80-175 (EMILVVEQPK…KVTRLAHGLA (96 aa)).

Belongs to the RecR family.

In terms of biological role, may play a role in DNA repair. It seems to be involved in an RecBC-independent recombinational process of DNA repair. It may act with RecF and RecO. The protein is Recombination protein RecR of Latilactobacillus sakei subsp. sakei (strain 23K) (Lactobacillus sakei subsp. sakei).